A 323-amino-acid chain; its full sequence is Formyl peptide receptor-related sequence 4 (323 aa).

Topologically, residues 1–29 (MEVNISMPLNGSEVVFYDSTTSRVLWILS) are extracellular. Residues Asn-4 and Asn-10 are each glycosylated (N-linked (GlcNAc...) asparagine). A helical membrane pass occupies residues 30-50 (LVVLFITFVLGVLGNGLVIWV). Residues 51 to 66 (AGFQMAHTVTTVSYLN) are Cytoplasmic-facing. A helical membrane pass occupies residues 67–87 (LALSDLSFMATLPLHIISMVM). At 88–99 (RGKWLFGWFLCK) the chain is on the extracellular side. Cys-98 and Cys-176 are joined by a disulfide. Residues 100–120 (LVHIIANINLFVSIFLITLIA) traverse the membrane as a helical segment. The Cytoplasmic portion of the chain corresponds to 121–144 (MDRCICVLCPVWSQNHRTVSLARK). A helical membrane pass occupies residues 145-165 (VVLGAWIFALLLTLPHFLFLT). The Extracellular portion of the chain corresponds to 166–202 (TVRDARGDVYCISKFESWVATSEEQLKVSVIAATASG). The helical transmembrane segment at 203–223 (IINFIIGFSMPMSFIAICYGL) threads the bilayer. Residues 224 to 241 (MAAKICRRGFVNSSRPLR) lie on the Cytoplasmic side of the membrane. The helical transmembrane segment at 242–262 (VLTAVAVSFFVCWFPFQLIML) threads the bilayer. The Extracellular portion of the chain corresponds to 263-280 (LGNIFNNETLSIIHMLVN). Residue Asn-269 is glycosylated (N-linked (GlcNAc...) asparagine). A helical transmembrane segment spans residues 281-301 (PANTLASFNSCLNPILYVFLG). Over 302 to 323 (QEFRDRLIYSLYASLERALRED) the chain is Cytoplasmic.

Belongs to the G-protein coupled receptor 1 family. As to expression, expressed in 0.6 % of a subset of sensory neurons located in the apical layer of the vomeronasal organ. Each neuron appears to express only one receptor gene.

The protein localises to the cell membrane. Its function is as follows. May have an olfactory function associated with the identification of pathogens or of pathogenic states. The protein is Formyl peptide receptor-related sequence 4 (Fpr-rs4) of Mus musculus (Mouse).